The chain runs to 484 residues: Ureidoglycolate hydrolase (484 aa).

Positions 1–28 are cleaved as a signal peptide; the sequence is MATSAAARFLAALAGAAVLLVLLGGAAG. His-148, Asp-159, Glu-194, and His-262 together coordinate Mn(2+). 2 substrate regions span residues 193 to 194 and 262 to 265; these read EE and HIEQ. The segment at 284–399 is involved in dimerization; that stretch reads APASIKVEFE…LSEFKIINQD (116 aa). Substrate contacts are provided by His-298, Asn-348, and Arg-361. The segment at 431 to 432 is substrate; it reads YH. His-456 contacts Mn(2+). Substrate is bound at residue His-456.

It belongs to the peptidase M20 family. As to quaternary structure, homodimer. Requires Mn(2+) as cofactor. The cofactor is Ni(2+). Co(2+) serves as cofactor.

The protein resides in the endoplasmic reticulum. It carries out the reaction (S)-ureidoglycolate + H2O + 2 H(+) = glyoxylate + 2 NH4(+) + CO2. It functions in the pathway nitrogen metabolism; (S)-allantoin degradation; glyoxylate from (S)-ureidoglycolate: step 1/1. Its function is as follows. Involved in the catabolism of purine nucleotides. The sequential activity of AAH, UGLYAH and UAH allows a complete purine breakdown without the intermediate generation of urea. The chain is Ureidoglycolate hydrolase from Oryza sativa subsp. japonica (Rice).